The primary structure comprises 302 residues: Pantothenate synthetase (302 aa).

30 to 37 (MGALHGGH) contributes to the ATP binding site. The active-site Proton donor is H37. Q61 provides a ligand contact to (R)-pantoate. Q61 serves as a coordination point for beta-alanine. ATP is bound at residue 147-150 (GEKD). Position 153 (Q153) interacts with (R)-pantoate. Residues V176 and 184–187 (KSSR) contribute to the ATP site.

This sequence belongs to the pantothenate synthetase family. As to quaternary structure, homodimer.

It is found in the cytoplasm. The enzyme catalyses (R)-pantoate + beta-alanine + ATP = (R)-pantothenate + AMP + diphosphate + H(+). It functions in the pathway cofactor biosynthesis; (R)-pantothenate biosynthesis; (R)-pantothenate from (R)-pantoate and beta-alanine: step 1/1. Functionally, catalyzes the condensation of pantoate with beta-alanine in an ATP-dependent reaction via a pantoyl-adenylate intermediate. This is Pantothenate synthetase from Shouchella clausii (strain KSM-K16) (Alkalihalobacillus clausii).